We begin with the raw amino-acid sequence, 532 residues long: Probable cytochrome c oxidase subunit 1 (532 aa).

Transmembrane regions (helical) follow at residues 33–53 (IMYI…SLLF), 74–94 (VLIT…ALFG), 95–115 (GFGN…FPRL), 118–138 (ISFW…FVDG), 163–183 (MAIF…INLI), 200–220 (PLFV…MPVL), 252–272 (LFWF…FGIV), and 284–304 (IFGY…GFIV). Histidine 79 is a Fe(II)-heme a binding site. The Cu cation site is built by histidine 258 and tyrosine 262. Histidine 307 and histidine 308 together coordinate Cu cation. 2 helical membrane-spanning segments follow: residues 318-338 (ALIY…IKIF) and 355-375 (MLFS…GIIL). Position 393 (histidine 393) interacts with heme a3. Transmembrane regions (helical) follow at residues 394–414 (FHYT…YYWF), 431–451 (FWIT…LGLA), and 473–493 (IGAG…FYTL). Histidine 395 serves as a coordination point for Fe(II)-heme a.

The protein belongs to the heme-copper respiratory oxidase family.

It is found in the cell membrane. The enzyme catalyses 4 Fe(II)-[cytochrome c] + O2 + 8 H(+)(in) = 4 Fe(III)-[cytochrome c] + 2 H2O + 4 H(+)(out). It participates in energy metabolism; oxidative phosphorylation. Functionally, cytochrome c oxidase is the component of the respiratory chain that catalyzes the reduction of oxygen to water. Subunits 1-3 form the functional core of the enzyme complex. CO I is the catalytic subunit of the enzyme. Electrons originating in cytochrome c are transferred via the copper A center of subunit 2 and heme A of subunit 1 to the bimetallic center formed by heme A3 and copper B. The protein is Probable cytochrome c oxidase subunit 1 (ctaD) of Rickettsia felis (strain ATCC VR-1525 / URRWXCal2) (Rickettsia azadi).